The chain runs to 583 residues: MYRTNTCGELRIVNENQEVILCGWVQKSRRMSGIVFVDLRDRYGITQLIFNKKVNLALYNKALELGREWVIQIEGKVVKRFNKNSDIPTGDIEIIVSRLRTLNPSEVPPFTIEENTDGGDDLRMKYRYLDLRRTLIRSNLELRHQMVFAIRNYLNSHEFMEVETPVLINSTPEGARDFIVPSRMNMGEFYSLPQSPQLFKQLLMIAGFDRYFQVVKCFRDEDLRTDRQPEFTQVDCEMSFVEQEDILSIFEGLTKHLFKTIKGLDISGFSRLSYADAIRFYGSDKPDIRFGMQLVEIKDITIGRGFDVFDESEYVGAICAEGCAFYTRKQLDELTDFVKHPQIGAAGLIYVRYSFDGSLKSSVDKFYSTVDLQKWIDRVGAKQGDLVLILYGEKRETQKQLSRLRLEMGSRLGLRDKKQFGCLWVIDFPLFEYDNVLNRFFAKHHPFTSPKQEDVCLLETNPEFVRANAFDMVINGIEIGGGSIRIHNYELQKKIFALLGFSESYTQSQFGFFVDAFKYGAPPHGGIALGLDRFVATFAGLDSIRDCIAFPKNNSGRDTMVGAPSIISRERLSELNLIVEGWQ.

Glu173 is a binding site for L-aspartate. The tract at residues 197–200 is aspartate; sequence QLFK. Arg219 lines the L-aspartate pocket. ATP contacts are provided by residues 219 to 221 and Gln228; that span reads RDE. Position 444 (His444) interacts with L-aspartate. Glu478 lines the ATP pocket. Arg485 lines the L-aspartate pocket. Residue 530-533 participates in ATP binding; it reads GLDR.

It belongs to the class-II aminoacyl-tRNA synthetase family. Type 1 subfamily. In terms of assembly, homodimer.

It localises to the cytoplasm. It carries out the reaction tRNA(Asp) + L-aspartate + ATP = L-aspartyl-tRNA(Asp) + AMP + diphosphate. In terms of biological role, catalyzes the attachment of L-aspartate to tRNA(Asp) in a two-step reaction: L-aspartate is first activated by ATP to form Asp-AMP and then transferred to the acceptor end of tRNA(Asp). This Azobacteroides pseudotrichonymphae genomovar. CFP2 protein is Aspartate--tRNA ligase.